Consider the following 276-residue polypeptide: Diaminopimelate epimerase (276 aa).

The substrate site is built by asparagine 13, glutamine 46, and asparagine 66. Catalysis depends on cysteine 75, which acts as the Proton donor. Substrate contacts are provided by residues 76 to 77 (GN), asparagine 159, asparagine 192, and 210 to 211 (ER). The active-site Proton acceptor is the cysteine 219. Residue 220 to 221 (GT) participates in substrate binding.

This sequence belongs to the diaminopimelate epimerase family. Homodimer.

It localises to the cytoplasm. It catalyses the reaction (2S,6S)-2,6-diaminopimelate = meso-2,6-diaminopimelate. It functions in the pathway amino-acid biosynthesis; L-lysine biosynthesis via DAP pathway; DL-2,6-diaminopimelate from LL-2,6-diaminopimelate: step 1/1. Its function is as follows. Catalyzes the stereoinversion of LL-2,6-diaminopimelate (L,L-DAP) to meso-diaminopimelate (meso-DAP), a precursor of L-lysine and an essential component of the bacterial peptidoglycan. The sequence is that of Diaminopimelate epimerase from Pseudomonas savastanoi pv. phaseolicola (strain 1448A / Race 6) (Pseudomonas syringae pv. phaseolicola (strain 1448A / Race 6)).